A 722-amino-acid polypeptide reads, in one-letter code: Mating-type switching protein swi2 (722 aa).

2 disordered regions span residues 1-35 (MNVNKKQESIPVNTGSESISSNDNERFEQGKGVGS) and 301-342 (SEEF…PLPS). The segment covering 9–22 (SIPVNTGSESISSN) has biased composition (polar residues). Acidic residues predominate over residues 302-316 (EEFDFEPSREDEDFP). Over residues 319 to 332 (TSDSTGQDPLSSEP) the composition is skewed to polar residues.

Interacts with swi5 and rhp51.

In terms of biological role, required for normal mating-type switching. In Schizosaccharomyces pombe (strain 972 / ATCC 24843) (Fission yeast), this protein is Mating-type switching protein swi2 (swi2).